The primary structure comprises 435 residues: Enolase (435 aa).

A (2R)-2-phosphoglycerate-binding site is contributed by Gln163. Glu205 serves as the catalytic Proton donor. 3 residues coordinate Mg(2+): Asp243, Glu292, and Asp319. (2R)-2-phosphoglycerate contacts are provided by Lys344, Arg373, Ser374, and Lys395. Residue Lys344 is the Proton acceptor of the active site.

It belongs to the enolase family. Homooctamer, a tetramer of homodimers. The cofactor is Mg(2+).

The protein resides in the cytoplasm. It is found in the secreted. The protein localises to the cell surface. It localises to the cell wall. The catalysed reaction is (2R)-2-phosphoglycerate = phosphoenolpyruvate + H2O. Its pathway is carbohydrate degradation; glycolysis; pyruvate from D-glyceraldehyde 3-phosphate: step 4/5. Its function is as follows. Catalyzes the reversible conversion of 2-phosphoglycerate (2-PG) into phosphoenolpyruvate (PEP). It is essential for the degradation of carbohydrates via glycolysis. 'Moonlights' as a plasminogen receptor. Binds plasminogen and more weakly plasmin when expressed on the bacterial cell surface; probably has more than one plasmin(ogen) binding site, may bind via Lys residues. Plasminogen binding potentially allows the bacterium to acquire surface-associated proteolytic activity, which in turn contributes to tissue invasion and virulence. The sequence is that of Enolase from Streptococcus pyogenes serotype M6 (strain ATCC BAA-946 / MGAS10394).